Reading from the N-terminus, the 402-residue chain is Elongation factor Tu (402 aa).

The 203-residue stretch at 10–212 (KPHINIGTIG…AVDEYIPEPK (203 aa)) folds into the tr-type G domain. Residues 19 to 26 (GHVDHGKT) form a G1 region. A GTP-binding site is contributed by 19–26 (GHVDHGKT). Residue Thr-26 coordinates Mg(2+). The interval 60 to 64 (GITIA) is G2. A G3 region spans residues 81–84 (DCPG). Residues 81-85 (DCPGH) and 136-139 (NKED) contribute to the GTP site. A G4 region spans residues 136–139 (NKED). The segment at 177-179 (SAF) is G5.

It belongs to the TRAFAC class translation factor GTPase superfamily. Classic translation factor GTPase family. EF-Tu/EF-1A subfamily. Monomer.

The protein localises to the cytoplasm. It carries out the reaction GTP + H2O = GDP + phosphate + H(+). GTP hydrolase that promotes the GTP-dependent binding of aminoacyl-tRNA to the A-site of ribosomes during protein biosynthesis. The sequence is that of Elongation factor Tu from Sulfurovum sp. (strain NBC37-1).